The chain runs to 97 residues: U-reduvitoxin-Pr10a (97 aa).

An N-terminal signal peptide occupies residues M1–G18. 2 Pacifastin domains span residues K22–R59 and K62–W97. 3 cysteine pairs are disulfide-bonded: C24-C42, C37-C56, and C40-C51. Residues P57–R59 form a pro-Pro-Arg motif necessary for proteolytic processing region. 3 disulfide bridges follow: C65/C82, C77/C96, and C80/C91.

Belongs to the protease inhibitor I19 family. In terms of tissue distribution, expressed by the venom gland.

It is found in the secreted. Its function is as follows. Inhibits trypsin activity and prophenoloxidase (PPO) activation, an enzyme essential for both clotting and insect innate immune responses. It does not inhibit activity of chymotrypsin and protease K, and has no effect on phenoloxidase (PO) activity. The protein is U-reduvitoxin-Pr10a of Platymeris rhadamanthus (Red spot assassin bug).